Reading from the N-terminus, the 128-residue chain is Glycine cleavage system H protein (128 aa).

One can recognise a Lipoyl-binding domain in the interval 24–106; that stretch reads LVRIGISEFA…HGEGWLLIIR (83 aa). Lysine 65 carries the N6-lipoyllysine modification.

This sequence belongs to the GcvH family. In terms of assembly, the glycine cleavage system is composed of four proteins: P, T, L and H. (R)-lipoate is required as a cofactor.

The glycine cleavage system catalyzes the degradation of glycine. The H protein shuttles the methylamine group of glycine from the P protein to the T protein. This is Glycine cleavage system H protein from Prochlorococcus marinus (strain NATL2A).